The primary structure comprises 54 residues: uncharacterized protein (54 aa).

A signal peptide spans 1–21 (MNSKQILSLSAFAMTIATAAA). Residues 22–29 (GNWNAGDT) are Extracellular-facing. A helical transmembrane segment spans residues 30–50 (IALLIGIAMFFVLLLALLGWI). Topologically, residues 51–54 (SRKK) are cytoplasmic.

Its subcellular location is the membrane. This is an uncharacterized protein from Dictyostelium discoideum (Social amoeba).